The sequence spans 251 residues: Protein phosphatase 1 regulatory subunit 35 (251 aa).

Disordered regions lie at residues L58–H99 and P180–P235. Residues P76–H99 show a composition bias toward basic and acidic residues.

It belongs to the PPP1R35 family.

Its subcellular location is the cytoplasm. The protein resides in the cytoskeleton. It is found in the microtubule organizing center. It localises to the centrosome. The protein localises to the centriole. In terms of biological role, during centriole duplication, may play a role in the centriole elongation by promoting the recruitment of the microtubule-binding elongation machinery, leading to the centriole to centrosome conversion. In addition may play a role in the primary cilia assembly. The protein is Protein phosphatase 1 regulatory subunit 35 of Danio rerio (Zebrafish).